The chain runs to 469 residues: Adenosylhomocysteinase (469 aa).

Thr-63, Asp-139, and Glu-164 together coordinate substrate. NAD(+) is bound at residue 165–167 (TTT). The substrate site is built by Lys-194 and Asp-198. NAD(+) is bound by residues Asn-199, 228-233 (GYGDVG), Glu-251, Asn-300, 321-323 (IGH), and Asn-375.

The protein belongs to the adenosylhomocysteinase family. Requires NAD(+) as cofactor.

The protein localises to the cytoplasm. It catalyses the reaction S-adenosyl-L-homocysteine + H2O = L-homocysteine + adenosine. It functions in the pathway amino-acid biosynthesis; L-homocysteine biosynthesis; L-homocysteine from S-adenosyl-L-homocysteine: step 1/1. Functionally, may play a key role in the regulation of the intracellular concentration of adenosylhomocysteine. The polypeptide is Adenosylhomocysteinase (Pseudomonas putida (strain GB-1)).